Reading from the N-terminus, the 119-residue chain is Ribonuclease P protein component (119 aa).

The protein belongs to the RnpA family. As to quaternary structure, consists of a catalytic RNA component (M1 or rnpB) and a protein subunit.

It carries out the reaction Endonucleolytic cleavage of RNA, removing 5'-extranucleotides from tRNA precursor.. In terms of biological role, RNaseP catalyzes the removal of the 5'-leader sequence from pre-tRNA to produce the mature 5'-terminus. It can also cleave other RNA substrates such as 4.5S RNA. The protein component plays an auxiliary but essential role in vivo by binding to the 5'-leader sequence and broadening the substrate specificity of the ribozyme. In Chlamydia muridarum (strain MoPn / Nigg), this protein is Ribonuclease P protein component.